The primary structure comprises 253 residues: H repeat-associated putative transposase YbfD (253 aa).

It belongs to the transposase 11 family.

The sequence is that of H repeat-associated putative transposase YbfD (ybfD) from Escherichia coli (strain K12).